Reading from the N-terminus, the 725-residue chain is MANPPVTEWKQSEAIPAHVAQETGCFTTLPIRIHKNNSIADQATLESINDWKQHLDDGWESRSGSAISKVGNWCSFIFSEALPERLPCITYLANIGNIHDDATEDATLDEAITSHAQFSTALSLDTDDEPSLQEAKTRRFRHLVSNCVLEILSIDRDMGTRMIVSYQKKWLDVMEHLNYEGIESLEEYLEFRMLNGGMEPFWLMCQFGMGLNIPDAELAPTRHIFEPAEWALVLTNDYWSWGREYNASLTKGSRIVNSIELLSRLRNISYDEAKEVVRDLITTYEAEYERRVQDFLRENPSTQMYLRQFIEVAGLVVAGNHYWCANCPRHHAWKEQDQAVHAVDQLEEFPAVEAQSPSSATHTAAPQEDPPVTEAPSPISSPSSSSSAKPSSSSAADSSSCTSTSQHSPSETDSTPPSSLHLLKSPHPVDAPCTYMSSLPSKGVRSTLIHALNQWFQISSRNVTLIKEITSMLHNSSLILDDIQDQSPLRRGKPAAHTIFSTAQSINSSTYLFVRAMQMVSENFESSVQMSFLEILQRMHIGQSYDLHWRFHLQCPTEDEYFEMVDAKTGCMFEMLLLLMSSKSRHVKDHSFTSFIRTFGRYFQVRDDYMNLTSGEYTAGKGWCEDLDEGKLSYPLIECQKMAPASFTQIMGIFRAKQADTAQLSDETKKYVIELFRKSGVLDSTLDWIMEMERQLLMEVKRLEGVMGDSNPMLYVLLQTLSLNQ.

Residues Met1–Trp333 are terpene cyclase. Asp100 contributes to the Mg(2+) binding site. Residues Asp100, Asn236, Ser240 to Glu244, and Arg329 to His330 contribute to the substrate site. The DDXXD 1 motif lies at Asp100–Glu104. Positions Asn236–Glu244 match the NSE/DTE motif. The tract at residues Lys334–Ser722 is prenyltransferase. A disordered region spans residues Val352–Pro426. The span at Gln355–Ala364 shows a compositional bias: polar residues. Over residues Ala375–Ser419 the composition is skewed to low complexity. The isopentenyl diphosphate site is built by Lys442, Arg445, and His474. Mg(2+) is bound by residues Asp481 and Asp485. Residues Asp481–Asp485 carry the DDXXD 2 motif. Arg490 provides a ligand contact to dimethylallyl diphosphate. Arg491 lines the isopentenyl diphosphate pocket. Dimethylallyl diphosphate-binding residues include Lys568, Thr569, Gln604, Asn611, Lys621, and Lys631.

The protein in the N-terminal section; belongs to the terpene synthase family. This sequence in the C-terminal section; belongs to the FPP/GGPP synthase family. In terms of assembly, hexamer. The cofactor is Mg(2+).

It carries out the reaction isopentenyl diphosphate + (2E,6E)-farnesyl diphosphate = (2E,6E,10E)-geranylgeranyl diphosphate + diphosphate. It catalyses the reaction isopentenyl diphosphate + (2E,6E,10E)-geranylgeranyl diphosphate = (2E,6E,10E,14E)-geranylfarnesyl diphosphate + diphosphate. It participates in secondary metabolite biosynthesis; terpenoid biosynthesis. In terms of biological role, bifunctional terpene synthase; part of the gene cluster that mediates the biosynthesis of betaestacins. The bifunctional terpene synthase btcA converts isopentenyl diphosphate (IPP) and dimethylallyl diphosphate (DMAPP) into the sesterterpene betaestacin I. The C-terminal prenyltransferase (PT) domain of btcA catalyzes formation of GFPP, whereas the N-terminal terpene cyclase (TC) domain catalyzes the cyclization of GFPP into betaestacin I. The cytochrome P450 monooxygenase btcB is then responsible for the six-step oxidation of betaestacin I to yield betaestacin II. The roles of the cytochrome P450 monooxygenase btcC and the alpha-ketoglutarate-dependent dioxygenase btcD have not been identified yet. The protein is Sesterterpene synthase btcA of Neocamarosporium betae (Beet black rot fungus).